The chain runs to 333 residues: Complement C1q and tumor necrosis factor-related protein 9B (333 aa).

The signal sequence occupies residues 1–19 (MRIWWLLLAIEICTGNINS). Collagen-like domains follow at residues 24-82 (RQGH…DGKV), 95-154 (GSPG…PGPM), and 155-191 (GPIGKPGPKGEAGPTGPQGEPGVRGIRGWKGDRGEKG). The disordered stretch occupies residues 24–189 (RQGHPGIPGN…IRGWKGDRGE (166 aa)). The span at 26 to 40 (GHPGIPGNPGHNGLP) shows a compositional bias: low complexity. Basic and acidic residues-rich tracts occupy residues 42-55 (RDGRDGAKGDKGDA) and 69-88 (TSGEKGERGADGKVEAKGIK). The 137-residue stretch at 197-333 (LVLPKSAFTV…FTGFLLFSSQ (137 aa)) folds into the C1q domain.

As to quaternary structure, interacts with CTRP9A and ADIPOQ. Forms heterotrimers and heterooligomeric complexes with CTRP9A. In terms of tissue distribution, expressed at low levels. Not expressed in adipose tissues.

It is found in the secreted. Probable adipokine. Activates AMPK, AKT, and p44/42 MAPK signaling pathways. This chain is Complement C1q and tumor necrosis factor-related protein 9B (C1QTNF9B), found in Homo sapiens (Human).